Reading from the N-terminus, the 426-residue chain is Enolase (426 aa).

Gln-163 serves as a coordination point for (2R)-2-phosphoglycerate. The Proton donor role is filled by Glu-205. Positions 242, 286, and 313 each coordinate Mg(2+). (2R)-2-phosphoglycerate-binding residues include Lys-338, Arg-367, Ser-368, and Lys-389. Lys-338 serves as the catalytic Proton acceptor.

Belongs to the enolase family. The cofactor is Mg(2+).

It localises to the cytoplasm. The protein localises to the secreted. The protein resides in the cell surface. The catalysed reaction is (2R)-2-phosphoglycerate = phosphoenolpyruvate + H2O. It functions in the pathway carbohydrate degradation; glycolysis; pyruvate from D-glyceraldehyde 3-phosphate: step 4/5. Catalyzes the reversible conversion of 2-phosphoglycerate (2-PG) into phosphoenolpyruvate (PEP). It is essential for the degradation of carbohydrates via glycolysis. This is Enolase from Helicobacter pylori (strain HPAG1).